A 281-amino-acid chain; its full sequence is Phosphatidylglycerol--prolipoprotein diacylglyceryl transferase (281 aa).

The next 3 membrane-spanning stretches (helical) occupy residues 11-31 (IIFT…VISF), 57-77 (LLYS…IIFY), and 89-109 (VFYI…AIIV). Arginine 140 is an a 1,2-diacyl-sn-glycero-3-phospho-(1'-sn-glycerol) binding site. 3 helical membrane-spanning segments follow: residues 194 to 214 (PTQL…IYFF), 222 to 242 (GSIS…IEFF), and 255 to 275 (IITM…IIMY).

It belongs to the Lgt family.

The protein resides in the cell inner membrane. It carries out the reaction L-cysteinyl-[prolipoprotein] + a 1,2-diacyl-sn-glycero-3-phospho-(1'-sn-glycerol) = an S-1,2-diacyl-sn-glyceryl-L-cysteinyl-[prolipoprotein] + sn-glycerol 1-phosphate + H(+). It participates in protein modification; lipoprotein biosynthesis (diacylglyceryl transfer). Functionally, catalyzes the transfer of the diacylglyceryl group from phosphatidylglycerol to the sulfhydryl group of the N-terminal cysteine of a prolipoprotein, the first step in the formation of mature lipoproteins. The sequence is that of Phosphatidylglycerol--prolipoprotein diacylglyceryl transferase from Buchnera aphidicola subsp. Acyrthosiphon pisum (strain APS) (Acyrthosiphon pisum symbiotic bacterium).